A 411-amino-acid chain; its full sequence is MSISFDLTIDDTRDQLARHARASLEAKPSLIGMSREEMAEALIKAGVPERQVKMRISQLWHWLYVRGVSDFADMRNISKDLRAMLAQHFTIARPEVVEEQISQDGTRKWLFRFPPRGAGRPVEIESVYIPEEGRGTLCVSSQVGCTLTCSFCHTGTQKLVRNLTSEEILAQLLTARDRLGDFPDKDTPDGAMVPAEGRKITNIVMMGMGEPLYNFEEVKKALLIASDGDGLSLSKRRITLSTSGVVPEIYRTGDEIGVMLAISLHAVRDELRDILVPINKKYPLEQLIKACREYPGLSNAKRITFEYVMLKDINDSLEDAKLLVKLLQGIPAKINLIPFNPWPGTNYQCSEWEQIEKFADYVNAAGYASPIRTPRGRDILAACGQLKSESERMRKSERLALEAMMIAGHGE.

The Proton acceptor role is filled by E125. Positions 131-380 (EEGRGTLCVS…IRTPRGRDIL (250 aa)) constitute a Radical SAM core domain. Cysteines 138 and 383 form a disulfide. The [4Fe-4S] cluster site is built by C145, C149, and C152. Residues 209 to 210 (GE), S241, 263 to 265 (SLH), and N340 each bind S-adenosyl-L-methionine. Catalysis depends on C383, which acts as the S-methylcysteine intermediate.

Belongs to the radical SAM superfamily. RlmN family. It depends on [4Fe-4S] cluster as a cofactor.

It is found in the cytoplasm. The catalysed reaction is adenosine(2503) in 23S rRNA + 2 reduced [2Fe-2S]-[ferredoxin] + 2 S-adenosyl-L-methionine = 2-methyladenosine(2503) in 23S rRNA + 5'-deoxyadenosine + L-methionine + 2 oxidized [2Fe-2S]-[ferredoxin] + S-adenosyl-L-homocysteine. The enzyme catalyses adenosine(37) in tRNA + 2 reduced [2Fe-2S]-[ferredoxin] + 2 S-adenosyl-L-methionine = 2-methyladenosine(37) in tRNA + 5'-deoxyadenosine + L-methionine + 2 oxidized [2Fe-2S]-[ferredoxin] + S-adenosyl-L-homocysteine. Specifically methylates position 2 of adenine 2503 in 23S rRNA and position 2 of adenine 37 in tRNAs. m2A2503 modification seems to play a crucial role in the proofreading step occurring at the peptidyl transferase center and thus would serve to optimize ribosomal fidelity. The polypeptide is Dual-specificity RNA methyltransferase RlmN (Brucella anthropi (strain ATCC 49188 / DSM 6882 / CCUG 24695 / JCM 21032 / LMG 3331 / NBRC 15819 / NCTC 12168 / Alc 37) (Ochrobactrum anthropi)).